Consider the following 509-residue polypeptide: Maturase K (509 aa).

The protein belongs to the intron maturase 2 family. MatK subfamily.

It localises to the plastid. The protein resides in the chloroplast. Usually encoded in the trnK tRNA gene intron. Probably assists in splicing its own and other chloroplast group II introns. In Clematis ligusticifolia (Western white clematis), this protein is Maturase K.